A 489-amino-acid polypeptide reads, in one-letter code: Acetylcholine receptor subunit beta (489 aa).

The signal sequence occupies residues Asn1–Ala20. The Extracellular segment spans residues Leu21 to Lys235. N-linked (GlcNAc...) asparagine glycans are attached at residues Asn135 and Asn161. Cys148 and Cys162 form a disulfide bridge. A run of 3 helical transmembrane segments spans residues Pro236–Leu260, Met268–Ala286, and Tyr302–Leu323. The Cytoplasmic portion of the chain corresponds to His324 to Arg457. A helical membrane pass occupies residues Leu458–Leu476.

Belongs to the ligand-gated ion channel (TC 1.A.9) family. Acetylcholine receptor (TC 1.A.9.1) subfamily. Beta-1/CHRNB1 sub-subfamily. In terms of assembly, pentamer of two alpha chains, and one each of the beta, delta, and gamma (in immature muscle) or epsilon (in mature muscle) chains.

It localises to the postsynaptic cell membrane. Its subcellular location is the cell membrane. It catalyses the reaction K(+)(in) = K(+)(out). The catalysed reaction is Na(+)(in) = Na(+)(out). After binding acetylcholine, the AChR responds by an extensive change in conformation that affects all subunits and leads to opening of an ion-conducting channel across the plasma membrane. In Xenopus laevis (African clawed frog), this protein is Acetylcholine receptor subunit beta (chrnb1).